Consider the following 491-residue polypeptide: Protein nucleotidyltransferase YdiU (491 aa).

ATP contacts are provided by Gly-94, Gly-96, Arg-97, Lys-117, Asp-129, Gly-130, Arg-180, and Arg-187. The active-site Proton acceptor is the Asp-256. 2 residues coordinate Mg(2+): Asn-257 and Asp-266. Asp-266 contributes to the ATP binding site.

It belongs to the SELO family. Mg(2+) serves as cofactor. It depends on Mn(2+) as a cofactor.

It catalyses the reaction L-seryl-[protein] + ATP = 3-O-(5'-adenylyl)-L-seryl-[protein] + diphosphate. It carries out the reaction L-threonyl-[protein] + ATP = 3-O-(5'-adenylyl)-L-threonyl-[protein] + diphosphate. The catalysed reaction is L-tyrosyl-[protein] + ATP = O-(5'-adenylyl)-L-tyrosyl-[protein] + diphosphate. The enzyme catalyses L-histidyl-[protein] + UTP = N(tele)-(5'-uridylyl)-L-histidyl-[protein] + diphosphate. It catalyses the reaction L-seryl-[protein] + UTP = O-(5'-uridylyl)-L-seryl-[protein] + diphosphate. It carries out the reaction L-tyrosyl-[protein] + UTP = O-(5'-uridylyl)-L-tyrosyl-[protein] + diphosphate. Its function is as follows. Nucleotidyltransferase involved in the post-translational modification of proteins. It can catalyze the addition of adenosine monophosphate (AMP) or uridine monophosphate (UMP) to a protein, resulting in modifications known as AMPylation and UMPylation. This Alkaliphilus metalliredigens (strain QYMF) protein is Protein nucleotidyltransferase YdiU.